Here is a 292-residue protein sequence, read N- to C-terminus: AKT-interacting protein (292 aa).

A compositionally biased stretch (polar residues) spans 1 to 11; that stretch reads MNPLWSMSSGS. The tract at residues 1-64 is disordered; it reads MNPLWSMSSG…SPAPAAQSTN (64 aa). Over residues 14-23 the composition is skewed to basic and acidic residues; it reads KRAEGEEKTL. Residue Ser-30 is modified to Phosphoserine. Residues 74 to 222 enclose the UBC core domain; it reads YLEYSLLAEF…VVDSVKVCTA (149 aa).

Belongs to the ubiquitin-conjugating enzyme family. FTS subfamily. Component of the FTS/Hook/FHIP complex (FHF complex), composed of AKTIP/FTS, FHIP1B, and one or more members of the Hook family of proteins HOOK1, HOOK2, and HOOK3. Interacts directly with HOOK1, HOOK2 and HOOK3. The FHF complex associates with the homotypic vesicular sorting complex (the HOPS complex). Also interacts with AKT1. May interact with FHIP1A.

It localises to the cytoplasm. Its subcellular location is the cell membrane. Functionally, component of the FTS/Hook/FHIP complex (FHF complex). The FHF complex may function to promote vesicle trafficking and/or fusion via the homotypic vesicular protein sorting complex (the HOPS complex). Regulates apoptosis by enhancing phosphorylation and activation of AKT1. Increases release of TNFSF6 via the AKT1/GSK3B/NFATC1 signaling cascade. FHF complex promotes the distribution of AP-4 complex to the perinuclear area of the cell. The polypeptide is AKT-interacting protein (Aktip) (Rattus norvegicus (Rat)).